A 142-amino-acid polypeptide reads, in one-letter code: Large ribosomal subunit protein uL13 (142 aa).

Belongs to the universal ribosomal protein uL13 family. Part of the 50S ribosomal subunit.

Its function is as follows. This protein is one of the early assembly proteins of the 50S ribosomal subunit, although it is not seen to bind rRNA by itself. It is important during the early stages of 50S assembly. This is Large ribosomal subunit protein uL13 from Chromohalobacter salexigens (strain ATCC BAA-138 / DSM 3043 / CIP 106854 / NCIMB 13768 / 1H11).